Here is a 188-residue protein sequence, read N- to C-terminus: Abscisic acid receptor PYL8 (188 aa).

The tract at residues 25–176 is START-like; sequence HELVDNQCSS…NLKSLADISE (152 aa). C32 and C157 are disulfide-bonded. K61 is a binding site for abscisate. The residue at position 77 (T77) is a Phosphothreonine; by CARK1. The Gate loop signature appears at 85 to 89; it reads SGLPA. Residues 89-94, 116-122, and E141 each bind abscisate; these read ATRSTE and RLKNYSS. The Latch loop signature appears at 115–117; it reads HRL.

It belongs to the PYR/PYL/RCAR abscisic acid intracellular receptor family. As to quaternary structure, monomer. Homodimer. Binds ABA on one subunit only. interacts with ABI1 and HAB1, and possibly with other PP2Cs. Binds to CARs protein in an ABA-independent manner, both at the plasma membrane and in the nucleus. Interacts directly with CAR1 and CAR4. Interacts with MYB44, MYB73 and MYB77 in an ABA-independent manner. Interacts with DDA1. Interacts with CARK1 in the cytosol. Binds to ABI1 when phosphorylated by CARK1. Interacts with AIP1 in the nucleus. Post-translationally, phosphorylated by CARK1 especially in response to abscisic acid (ABA); this phosphorylation promotes its stability and inhibitory ability to ABI1. In terms of processing, ubiquitinated in DDA1- and CDD complex-dependent manner. Ubiquitination leads to its subsequent proteasomal degradation.

It is found in the cytoplasm. The protein resides in the cytosol. It localises to the nucleus. The protein localises to the cell membrane. Receptor for abscisic acid (ABA) required for ABA-mediated responses such as stomatal closure and germination inhibition. Inhibits the activity of group-A protein phosphatases type 2C (PP2Cs) in an ABA-independent manner but more efficiently when activated by ABA. Confers enhanced sensitivity to ABA. Can be activated by both (-)-ABA and (+)-ABA. Mediates crosstalk between ABA and auxin signaling to regulate lateral root growth. Required for lateral root growth suppression by ABA. In response to auxin, promotes lateral root growth by enhancing MYB77-dependent transcription of the auxin-responsive gene IAA19. Enhances the abilities of MYB44 and MYB73 to activate IAA19 gene. The sequence is that of Abscisic acid receptor PYL8 from Arabidopsis thaliana (Mouse-ear cress).